The chain runs to 316 residues: Ornithine carbamoyltransferase (316 aa).

Residues 57–60 (STRT), Gln-84, Arg-108, and 135–138 (HPCQ) contribute to the carbamoyl phosphate site. Residues Asn-166, Asp-230, and 234–235 (SM) each bind L-ornithine. Carbamoyl phosphate-binding positions include 269 to 270 (CL) and Arg-297.

Belongs to the aspartate/ornithine carbamoyltransferase superfamily. OTCase family.

It is found in the cytoplasm. The catalysed reaction is carbamoyl phosphate + L-ornithine = L-citrulline + phosphate + H(+). The protein operates within amino-acid biosynthesis; L-arginine biosynthesis; L-arginine from L-ornithine and carbamoyl phosphate: step 1/3. In terms of biological role, reversibly catalyzes the transfer of the carbamoyl group from carbamoyl phosphate (CP) to the N(epsilon) atom of ornithine (ORN) to produce L-citrulline. The protein is Ornithine carbamoyltransferase (argF) of Bacillus cereus (strain ATCC 14579 / DSM 31 / CCUG 7414 / JCM 2152 / NBRC 15305 / NCIMB 9373 / NCTC 2599 / NRRL B-3711).